A 406-amino-acid chain; its full sequence is Nodal homolog (406 aa).

The first 18 residues, 1–18 (MAFLTAVLYLGFACISQG), serve as a signal peptide directing secretion. A propeptide spanning residues 19–281 (LPTWPDRVES…RVPGIRRHRR (263 aa)) is cleaved from the precursor. 3 N-linked (GlcNAc...) asparagine glycosylation sites follow: Asn-71, Asn-136, and Asn-172. The tract at residues 195–222 (KERAERGSGMSNAEFIDAPGPSQQYNPH) is disordered. Disulfide bonds link Cys-306-Cys-372, Cys-335-Cys-403, and Cys-339-Cys-405. Residue Asn-344 is glycosylated (N-linked (GlcNAc...) asparagine).

The protein belongs to the TGF-beta family. In terms of assembly, homodimer; disulfide-linked. Interacts with, and is inhibited by cer1 and gdf10/bmp3b. In the first phase of expression, localized to the vegetal region of the blastula. During gastrulation (stage 10.5), this expression disappears and instead becomes localized to the dorsal marginal zone, with enrichment in the organizer. During the second phase of expression in neurulae and tailbud embryos, expression restarts firstly in two symmetric patches near the posterior end of the notochord, and then in a large asymmetrical domain in the left lateral plate mesoderm.

Its subcellular location is the secreted. Its function is as follows. Cooperation and regulatory loops of multiple nodals are essential for mesendoderm patterning in early embryos. Essential for mesoderm formation and axial patterning during embryonic development. Activates the activin-like signaling pathway to induce dorsal and ventral mesoderm in animal cap ectoderm. In addition, also dorsalizes ventral marginal zone (VMZ) tissues during gastrulation. Acts in a downstream signaling cascade via cripto and cer1 to mediate cardiogenesis in embryonic mesoderm. Directs the orientation of the left-right axis by driving the left-specific gene cascade in the left lateral plate mesoderm. This is Nodal homolog from Xenopus laevis (African clawed frog).